Here is a 370-residue protein sequence, read N- to C-terminus: tRNA 2-selenouridine synthase (370 aa).

In terms of domain architecture, Rhodanese spans 12–136 (FLDDVPMMDM…MRTFLLETTQ (125 aa)). The S-selanylcysteine intermediate role is filled by cysteine 95.

The protein belongs to the SelU family. Monomer.

The catalysed reaction is 5-methylaminomethyl-2-thiouridine(34) in tRNA + selenophosphate + (2E)-geranyl diphosphate + H2O + H(+) = 5-methylaminomethyl-2-selenouridine(34) in tRNA + (2E)-thiogeraniol + phosphate + diphosphate. It catalyses the reaction 5-methylaminomethyl-2-thiouridine(34) in tRNA + (2E)-geranyl diphosphate = 5-methylaminomethyl-S-(2E)-geranyl-thiouridine(34) in tRNA + diphosphate. It carries out the reaction 5-methylaminomethyl-S-(2E)-geranyl-thiouridine(34) in tRNA + selenophosphate + H(+) = 5-methylaminomethyl-2-(Se-phospho)selenouridine(34) in tRNA + (2E)-thiogeraniol. The enzyme catalyses 5-methylaminomethyl-2-(Se-phospho)selenouridine(34) in tRNA + H2O = 5-methylaminomethyl-2-selenouridine(34) in tRNA + phosphate. In terms of biological role, involved in the post-transcriptional modification of the uridine at the wobble position (U34) of tRNA(Lys), tRNA(Glu) and tRNA(Gln). Catalyzes the conversion of 2-thiouridine (S2U-RNA) to 2-selenouridine (Se2U-RNA). Acts in a two-step process involving geranylation of 2-thiouridine (S2U) to S-geranyl-2-thiouridine (geS2U) and subsequent selenation of the latter derivative to 2-selenouridine (Se2U) in the tRNA chain. This Pseudomonas putida (strain GB-1) protein is tRNA 2-selenouridine synthase.